Here is a 24-residue protein sequence, read N- to C-terminus: Brevinin-1Pe (24 aa).

A disulfide bridge connects residues Cys18 and Cys24.

As to expression, expressed by the skin glands.

It is found in the secreted. Its function is as follows. Antibacterial activity against Gram-positive bacterium S.aureus and Gram-negative bacterium E.coli. Has activity against C.albicans. The protein is Brevinin-1Pe of Lithobates pipiens (Northern leopard frog).